The sequence spans 375 residues: Carbamoyl phosphate synthase small chain (375 aa).

Residues 1–180 form a CPSase region; sequence MSKALLVLED…DAYVVEPKGK (180 aa). Residues Ser46, Gly232, and Gly234 each contribute to the L-glutamine site. Residues 184-375 form the Glutamine amidotransferase type-1 domain; it reads TVAALDLGIK…SFVELMAAQR (192 aa). Cys260 acts as the Nucleophile in catalysis. L-glutamine-binding residues include Phe261, Gln264, Asn302, Gly304, and Phe305. Active-site residues include His350 and Glu352.

This sequence belongs to the CarA family. In terms of assembly, composed of two chains; the small (or glutamine) chain promotes the hydrolysis of glutamine to ammonia, which is used by the large (or ammonia) chain to synthesize carbamoyl phosphate. Tetramer of heterodimers (alpha,beta)4.

The enzyme catalyses hydrogencarbonate + L-glutamine + 2 ATP + H2O = carbamoyl phosphate + L-glutamate + 2 ADP + phosphate + 2 H(+). The catalysed reaction is L-glutamine + H2O = L-glutamate + NH4(+). The protein operates within amino-acid biosynthesis; L-arginine biosynthesis; carbamoyl phosphate from bicarbonate: step 1/1. It participates in pyrimidine metabolism; UMP biosynthesis via de novo pathway; (S)-dihydroorotate from bicarbonate: step 1/3. Its function is as follows. Small subunit of the glutamine-dependent carbamoyl phosphate synthetase (CPSase). CPSase catalyzes the formation of carbamoyl phosphate from the ammonia moiety of glutamine, carbonate, and phosphate donated by ATP, constituting the first step of 2 biosynthetic pathways, one leading to arginine and/or urea and the other to pyrimidine nucleotides. The small subunit (glutamine amidotransferase) binds and cleaves glutamine to supply the large subunit with the substrate ammonia. The sequence is that of Carbamoyl phosphate synthase small chain from Mycobacterium leprae (strain TN).